The chain runs to 353 residues: Quinolinate synthase (353 aa).

The iminosuccinate site is built by H47 and S68. C113 is a binding site for [4Fe-4S] cluster. Iminosuccinate-binding positions include Y139–N141 and S156. Residue C200 participates in [4Fe-4S] cluster binding. Iminosuccinate contacts are provided by residues H226 to E228 and T243. C297 is a [4Fe-4S] cluster binding site.

The protein belongs to the quinolinate synthase family. Type 1 subfamily. [4Fe-4S] cluster is required as a cofactor.

The protein localises to the cytoplasm. It carries out the reaction iminosuccinate + dihydroxyacetone phosphate = quinolinate + phosphate + 2 H2O + H(+). The protein operates within cofactor biosynthesis; NAD(+) biosynthesis; quinolinate from iminoaspartate: step 1/1. Its function is as follows. Catalyzes the condensation of iminoaspartate with dihydroxyacetone phosphate to form quinolinate. The polypeptide is Quinolinate synthase (Vibrio vulnificus (strain CMCP6)).